The sequence spans 822 residues: Probable RING finger protein 207 homolog (822 aa).

Residues 8 to 42 form an RING-type zinc finger; the sequence is CTICKNEFEEPILLSCQHTTCRKCSTGSPSCKSCS. A B box-type 1; atypical zinc finger spans residues 68 to 115; sequence EEMEECANCEQISLPMFYCETCQQSLCLVCRNVTHQARMFSSHKIISS. Positions 73, 76, 97, and 102 each coordinate Zn(2+). A B box-type 2; degenerate zinc finger spans residues 122-164; sequence YSSSLCKDHNEPYILYCSDVRKLVCIQCFNGRPLEERHSFISI. Coiled coils occupy residues 526–558 and 738–769; these read NSQNRILAIEKEEENRRLNQEAKKKEELAGQSA and DKDEVIEKEEIEKETEKEKKKVIRRRVKKVSE.

The chain is Probable RING finger protein 207 homolog from Caenorhabditis elegans.